The primary structure comprises 141 residues: Pancreatic progenitor cell differentiation and proliferation factor-like protein (141 aa).

The interval 72 to 141 (DQSACGGNGP…GAPKDTNSPQ (70 aa)) is disordered. A compositionally biased stretch (low complexity) spans 95–105 (SLLQQEESQLL). Residues 112–122 (GTVNRFRNSQT) are compositionally biased toward polar residues.

The protein belongs to the PPDPF family.

The sequence is that of Pancreatic progenitor cell differentiation and proliferation factor-like protein from Bos taurus (Bovine).